The sequence spans 328 residues: MKAPVRVAVTGAAGQIGYALLFRIASGEMLGKDQPVILQLLELSNEKAQAALKGVMMELEDCAFPLLAGMVGTDDAEVAFKDIDVALLVGARPRGPGMERKDLLLENAKIFTAQGAALNKVAKRDVKVLVVGNPANTNAYIAMKSAPDLNPKNFTAMLRLDHNRALSQLALKLGKPVGGIEKLVVWGNHSPTMYPDYRFATSDGASIGDAINDQEWNASTFIPTVGKRGAAIIEARGLSSAASAANAAIDHVRDWVLGSNGKWVTMGVPSDGSYGISEGVIFGFPVTTENGQYSLVKDLPIDDFSQKYIDKTLAELEEERSGVSHLLG.

11–17 (GAAGQIG) is an NAD(+) binding site. 2 residues coordinate substrate: arginine 94 and arginine 100. Residues asparagine 107, glutamine 114, and 131-133 (VGN) each bind NAD(+). Substrate-binding residues include asparagine 133 and arginine 164. Histidine 189 acts as the Proton acceptor in catalysis.

It belongs to the LDH/MDH superfamily. MDH type 2 family.

The catalysed reaction is (S)-malate + NAD(+) = oxaloacetate + NADH + H(+). Its function is as follows. Catalyzes the reversible oxidation of malate to oxaloacetate. This chain is Malate dehydrogenase, found in Xanthomonas oryzae pv. oryzae (strain MAFF 311018).